We begin with the raw amino-acid sequence, 463 residues long: Argininosuccinate lyase (463 aa).

It belongs to the lyase 1 family. Argininosuccinate lyase subfamily.

Its subcellular location is the cytoplasm. It catalyses the reaction 2-(N(omega)-L-arginino)succinate = fumarate + L-arginine. Its pathway is amino-acid biosynthesis; L-arginine biosynthesis; L-arginine from L-ornithine and carbamoyl phosphate: step 3/3. The protein is Argininosuccinate lyase of Chlorobaculum tepidum (strain ATCC 49652 / DSM 12025 / NBRC 103806 / TLS) (Chlorobium tepidum).